Here is a 1243-residue protein sequence, read N- to C-terminus: Inositol hexakisphosphate and diphosphoinositol-pentakisphosphate kinase 2 (1243 aa).

Position 38 is a phosphoserine (serine 38). 53–54 (KK) lines the substrate pocket. ATP is bound by residues arginine 134, lysine 187, histidine 194, and arginine 213. Position 213-214 (213-214 (RK)) interacts with substrate. Phosphoserine is present on serine 223. ATP contacts are provided by residues 237 to 240 (EEFM) and 246 to 248 (DVK). Substrate is bound by residues lysine 248 and arginine 262. Residues serine 264, aspartate 309, and 321–323 (DVN) contribute to the ATP site. 326-329 (SFVK) provides a ligand contact to substrate. The segment at 371–442 (PTTSGTMMEL…VLDIARQLLM (72 aa)) is polyphosphoinositide-binding domain. Disordered stretches follow at residues 898–941 (KGCE…RDEV) and 957–1016 (HIHR…SPVS). Basic and acidic residues predominate over residues 915–941 (ASRENEGRRPFKIDNDDEPHTSKRDEV). Residues 958–969 (IHRKSPLPRSRK) are compositionally biased toward basic residues. A phosphoserine mark is found at serine 1006, serine 1016, serine 1074, serine 1091, serine 1165, serine 1172, and serine 1180. A disordered region spans residues 1185-1243 (TPAKILPTPPATLKSTKASSKPATSGPSSAVVPNTSSRKKNITSKTETHEHKKNTGKKK). A compositionally biased stretch (low complexity) spans 1195–1209 (ATLKSTKASSKPATS). The segment covering 1210 to 1220 (GPSSAVVPNTS) has biased composition (polar residues). Phosphoserine occurs at positions 1220 and 1221.

It belongs to the histidine acid phosphatase family. VIP1 subfamily.

The protein resides in the cytoplasm. It is found in the cytosol. It carries out the reaction 1D-myo-inositol hexakisphosphate + ATP = 1-diphospho-1D-myo-inositol 2,3,4,5,6-pentakisphosphate + ADP. The catalysed reaction is 5-diphospho-1D-myo-inositol 1,2,3,4,6-pentakisphosphate + ATP + H(+) = 1,5-bis(diphospho)-1D-myo-inositol 2,3,4,6-tetrakisphosphate + ADP. Bifunctional inositol kinase that acts in concert with the IP6K kinases IP6K1, IP6K2 and IP6K3 to synthesize the diphosphate group-containing inositol pyrophosphates diphosphoinositol pentakisphosphate, PP-InsP5, and bis-diphosphoinositol tetrakisphosphate, (PP)2-InsP4. PP-InsP5 and (PP)2-InsP4, also respectively called InsP7 and InsP8, regulate a variety of cellular processes, including apoptosis, vesicle trafficking, cytoskeletal dynamics, exocytosis, insulin signaling and neutrophil activation. Phosphorylates inositol hexakisphosphate (InsP6) at position 1 to produce PP-InsP5 which is in turn phosphorylated by IP6Ks to produce (PP)2-InsP4. Alternatively, phosphorylates PP-InsP5 at position 1, produced by IP6Ks from InsP6, to produce (PP)2-InsP4. Required for normal hearing. This is Inositol hexakisphosphate and diphosphoinositol-pentakisphosphate kinase 2 from Homo sapiens (Human).